The sequence spans 458 residues: Argininosuccinate lyase (458 aa).

It belongs to the lyase 1 family. Argininosuccinate lyase subfamily.

The protein resides in the cytoplasm. The catalysed reaction is 2-(N(omega)-L-arginino)succinate = fumarate + L-arginine. The protein operates within amino-acid biosynthesis; L-arginine biosynthesis; L-arginine from L-ornithine and carbamoyl phosphate: step 3/3. The protein is Argininosuccinate lyase of Actinobacillus pleuropneumoniae serotype 7 (strain AP76).